The chain runs to 453 residues: Allantoinase (453 aa).

6 residues coordinate Zn(2+): H59, H61, K146, H186, H242, and D315. An N6-carboxylysine modification is found at K146.

This sequence belongs to the metallo-dependent hydrolases superfamily. Allantoinase family. As to quaternary structure, homotetramer. Zn(2+) serves as cofactor. Carboxylation allows a single lysine to coordinate two zinc ions.

The catalysed reaction is (S)-allantoin + H2O = allantoate + H(+). It participates in nitrogen metabolism; (S)-allantoin degradation; allantoate from (S)-allantoin: step 1/1. Functionally, catalyzes the conversion of allantoin (5-ureidohydantoin) to allantoic acid by hydrolytic cleavage of the five-member hydantoin ring. This is Allantoinase from Escherichia coli (strain 55989 / EAEC).